Consider the following 250-residue polypeptide: uncharacterized protein (250 aa).

The N-terminal stretch at 1 to 24 is a signal peptide; it reads MKGFLKPNFSLGALFLTLSPIATA. Residue cysteine 25 is the site of N-palmitoyl cysteine attachment. Cysteine 25 carries the S-diacylglycerol cysteine lipid modification. In terms of domain architecture, TNase-like spans 44 to 200; it reads RLRKARVNHW…FNNRKNIFSY (157 aa).

The protein localises to the cell membrane. This is an uncharacterized protein from Mycoplasma genitalium (strain ATCC 33530 / DSM 19775 / NCTC 10195 / G37) (Mycoplasmoides genitalium).